A 372-amino-acid polypeptide reads, in one-letter code: Aminomethyltransferase (372 aa).

The protein belongs to the GcvT family. The glycine cleavage system is composed of four proteins: P, T, L and H.

It carries out the reaction N(6)-[(R)-S(8)-aminomethyldihydrolipoyl]-L-lysyl-[protein] + (6S)-5,6,7,8-tetrahydrofolate = N(6)-[(R)-dihydrolipoyl]-L-lysyl-[protein] + (6R)-5,10-methylene-5,6,7,8-tetrahydrofolate + NH4(+). In terms of biological role, the glycine cleavage system catalyzes the degradation of glycine. This chain is Aminomethyltransferase, found in Prochlorococcus marinus (strain NATL1A).